Here is a 211-residue protein sequence, read N- to C-terminus: MITGKLITVEGPDGAGKTTVLEQLIPPLKQKVAQEILTTREPGGVAISEYIRELILDINHTTMDPKTELLLYIAARRQHLVEKVLPALEAGQLVFIDRFIDSSVAYQGAGRGLIKADIQWLNEFATDGLEPDLTLYFDVPSEIGLARINANQQREVNRLDLETIEIHQRVRKGYLALAKEHPKRIVTIDATKPLKEVVSVALEHVLALLLA.

Residue 11–18 (GPDGAGKT) participates in ATP binding.

It belongs to the thymidylate kinase family.

The catalysed reaction is dTMP + ATP = dTDP + ADP. Functionally, phosphorylation of dTMP to form dTDP in both de novo and salvage pathways of dTTP synthesis. The protein is Thymidylate kinase of Streptococcus pyogenes serotype M18 (strain MGAS8232).